The primary structure comprises 178 residues: Translation initiation factor IF-3 (178 aa).

Residues 1–20 (MRRPFRATPVQKDGPRSNRD) form a disordered region.

The protein belongs to the IF-3 family. As to quaternary structure, monomer.

It localises to the cytoplasm. Functionally, IF-3 binds to the 30S ribosomal subunit and shifts the equilibrium between 70S ribosomes and their 50S and 30S subunits in favor of the free subunits, thus enhancing the availability of 30S subunits on which protein synthesis initiation begins. This chain is Translation initiation factor IF-3, found in Brucella abortus biovar 1 (strain 9-941).